A 46-amino-acid polypeptide reads, in one-letter code: uncharacterized protein (46 aa).

This is an uncharacterized protein from Shigella flexneri.